Here is a 338-residue protein sequence, read N- to C-terminus: Phosphoribosylformylglycinamidine cyclo-ligase (338 aa).

Belongs to the AIR synthase family.

It localises to the cytoplasm. It catalyses the reaction 2-formamido-N(1)-(5-O-phospho-beta-D-ribosyl)acetamidine + ATP = 5-amino-1-(5-phospho-beta-D-ribosyl)imidazole + ADP + phosphate + H(+). It participates in purine metabolism; IMP biosynthesis via de novo pathway; 5-amino-1-(5-phospho-D-ribosyl)imidazole from N(2)-formyl-N(1)-(5-phospho-D-ribosyl)glycinamide: step 2/2. The chain is Phosphoribosylformylglycinamidine cyclo-ligase from Thermoplasma volcanium (strain ATCC 51530 / DSM 4299 / JCM 9571 / NBRC 15438 / GSS1).